A 318-amino-acid polypeptide reads, in one-letter code: DNA polymerase IV (318 aa).

In terms of domain architecture, UmuC spans 6–186 (IIHIDMDAFY…LPLGKIPGVG (181 aa)). The Mg(2+) site is built by D10 and D104. Residue E105 is part of the active site.

It belongs to the DNA polymerase type-Y family. Monomer. Mg(2+) serves as cofactor.

The protein localises to the cytoplasm. It catalyses the reaction DNA(n) + a 2'-deoxyribonucleoside 5'-triphosphate = DNA(n+1) + diphosphate. Functionally, poorly processive, error-prone DNA polymerase involved in untargeted mutagenesis. Copies undamaged DNA at stalled replication forks, which arise in vivo from mismatched or misaligned primer ends. These misaligned primers can be extended by PolIV. Exhibits no 3'-5' exonuclease (proofreading) activity. May be involved in translesional synthesis, in conjunction with the beta clamp from PolIII. The protein is DNA polymerase IV of Neisseria meningitidis serogroup B (strain ATCC BAA-335 / MC58).